A 107-amino-acid chain; its full sequence is Putative double-stranded DNA mimic protein YpsIP31758_1954 (107 aa).

The protein belongs to the putative dsDNA mimic protein family.

Its function is as follows. May act as a double-stranded DNA (dsDNA) mimic. Probably regulates the activity of a dsDNA-binding protein. The chain is Putative double-stranded DNA mimic protein YpsIP31758_1954 from Yersinia pseudotuberculosis serotype O:1b (strain IP 31758).